The sequence spans 155 residues: E3 ubiquitin-protein ligase RHA2A (155 aa).

The segment at 86–128 (CVVCLSKLKEGEEVRKLECRHVFHKKCLEGWLHQFNFTCPLCR) adopts an RING-type; atypical zinc-finger fold.

As to quaternary structure, interacts with NAC019 and NAC055. As to expression, expressed in stems, flowers, cauline leaves, rosettes, siliques, seeds and roots.

It is found in the cytoplasm. It localises to the nucleus. It catalyses the reaction S-ubiquitinyl-[E2 ubiquitin-conjugating enzyme]-L-cysteine + [acceptor protein]-L-lysine = [E2 ubiquitin-conjugating enzyme]-L-cysteine + N(6)-ubiquitinyl-[acceptor protein]-L-lysine.. The protein operates within protein modification; protein ubiquitination. Functionally, E3 ubiquitin-protein ligase involved in the positive regulation of abscisic acid (ABA) signaling and responses to salt and osmotic stresses during seed germination and early seedling development. Acts additively with RHA2B in regulating ABA signaling and drought response. Possesses E3 ubiquitin ligase activity in vitro. The protein is E3 ubiquitin-protein ligase RHA2A of Arabidopsis thaliana (Mouse-ear cress).